Here is a 1497-residue protein sequence, read N- to C-terminus: Collagen alpha-2(V) chain (1497 aa).

The first 26 residues, 1-26 (MMANWVGARPLLILSVLLGYCVSIKA), serve as a signal peptide directing secretion. In terms of domain architecture, VWFC spans 38–96 (IACTQHGQMYLNRDIWKPSPCQICVCDNGAILCDKIECPEVLNCANPITPTGECCPVCP). The segment at 103-1265 (TSFGRGRKGQ…PDDTNKTDPG (1163 aa)) is disordered. Positions 141-143 (RGD) match the Cell attachment site motif. Residues 155–164 (PQGIDGEPGV) are compositionally biased toward low complexity. Residues 168-180 (PGAPGPPGHPSHP) are compositionally biased toward pro residues. Residues 210–225 (PGSVGPVGPRGPQGLQ) are compositionally biased toward low complexity. Pro residues predominate over residues 234–246 (AGPPGEPGEPGPM). 4-hydroxyproline occurs at positions 288, 291, and 294. 2 stretches are compositionally biased toward low complexity: residues 320 to 338 (EAGP…PRGM) and 425 to 441 (TPGA…SGPP). The Cell attachment site motif lies at 504 to 506 (RGD). Positions 550–559 (GPKGGQGDPG) are enriched in gly residues. Low complexity predominate over residues 602–611 (SIGIRGQPGS). 2 positions are modified to 4-hydroxyproline: Pro609 and Pro615. The segment covering 708 to 719 (RGERGNPGERGE) has biased composition (basic and acidic residues). The segment covering 730-739 (GMAGGHGPDG) has biased composition (gly residues). Over residues 744–756 (PGPTGTIGDTGPP) the composition is skewed to low complexity. Residues 774–785 (KGDRGGIGEKGA) are compositionally biased toward basic and acidic residues. Low complexity-rich tracts occupy residues 824-839 (PPGS…ENGP) and 878-891 (LAGS…HGVP). Over residues 892–901 (GLKGGRGTQG) the composition is skewed to gly residues. Pro residues predominate over residues 917-927 (PPGPAGAPGPA). Short sequence motifs (cell attachment site) lie at residues 942–944 (RGD), 1065–1067 (RGD), and 1068–1070 (RGD). The span at 1061–1070 (AVGERGDRGD) shows a compositional bias: basic and acidic residues. A compositionally biased stretch (low complexity) spans 1091 to 1112 (APGDAGQRGEPGSRGPVGPPGR). Short sequence motifs (cell attachment site) lie at residues 1125–1127 (RGD) and 1134–1136 (RGD). Residues 1125–1139 (RGDKGDNGDRGDRGQ) show a composition bias toward basic and acidic residues. 2 stretches are compositionally biased toward pro residues: residues 1169–1179 (PFGPRGPPGPV) and 1209–1224 (EGPP…PGPP). A propeptide spans 1228-1497 (TAALGDIMGH…GLDIGPVCFM (270 aa)) (C-terminal propeptide). Asn1260 carries N-linked (GlcNAc...) asparagine glycosylation. Positions 1264-1497 (PGIHVTLKSL…GLDIGPVCFM (234 aa)) constitute a Fibrillar collagen NC1 domain. 3 disulfide bridges follow: Cys1294/Cys1326, Cys1334/Cys1495, and Cys1403/Cys1448. Residues Asp1312, Asn1314, Gln1315, and Asp1320 each coordinate Ca(2+). A glycan (N-linked (GlcNAc...) asparagine) is linked at Asn1398.

The protein belongs to the fibrillar collagen family. As to quaternary structure, trimers of two alpha 1(V) and one alpha 2(V) chains expressed in most tissues and trimers of one alpha 1(V), one alpha 2(V), and one alpha 3(V) chains with a more limited distribution of expression. In terms of processing, prolines at the third position of the tripeptide repeating unit (G-X-P) are hydroxylated in some or all of the chains. Probably 3-hydroxylated on prolines by LEPREL1. Hydroxylation on proline residues within the sequence motif, GXPG, is most likely to be 4-hydroxy as this fits the requirement for 4-hydroxylation in vertebrates.

It localises to the secreted. The protein resides in the extracellular space. Its subcellular location is the extracellular matrix. In terms of biological role, type V collagen is a member of group I collagen (fibrillar forming collagen). It is a minor connective tissue component of nearly ubiquitous distribution. Type V collagen binds to DNA, heparan sulfate, thrombospondin, heparin, and insulin. Type V collagen is a key determinant in the assembly of tissue-specific matrices. In Mus musculus (Mouse), this protein is Collagen alpha-2(V) chain.